Consider the following 564-residue polypeptide: Zyxin (564 aa).

Residue Ala2 is modified to N-acetylalanine. The segment at Val30–Lys141 is disordered. Pro residues-rich tracts occupy residues Ile63–Leu78 and Phe93–Pro109. Phosphoserine is present on residues Ser117, Ser144, Ser170, and Ser171. Residues Asn162–Thr344 form a disordered region. Composition is skewed to pro residues over residues Val174–Lys189 and Pro197–Gln214. Position 180 is a phosphothreonine (Thr180). Residues Gln234–Pro243 show a composition bias toward polar residues. An Asymmetric dimethylarginine modification is found at Arg244. Residues Pro255–Ala275 show a composition bias toward low complexity. N6-acetyllysine occurs at positions 256 and 263. Thr265 carries the phosphothreonine modification. An N6-acetyllysine modification is found at Lys270. 2 positions are modified to phosphoserine: Ser272 and Ser300. Positions Ser294–Gln310 are enriched in polar residues. A compositionally biased stretch (basic and acidic residues) spans Gln311–His322. Position 336 is a phosphoserine (Ser336). LIM zinc-binding domains follow at residues Cys376–Lys435, Cys436–Arg495, and Cys496–Ala562.

Belongs to the zyxin/ajuba family. Interacts, via the Pro-rich regions, with the EVH1 domains of ENAH, EVL and VASP. Interacts with the first LIM domain of TES. Interacts with SYNPO2.

The protein localises to the cytoplasm. The protein resides in the cytoskeleton. Its subcellular location is the cell junction. It localises to the focal adhesion. It is found in the nucleus. Its function is as follows. Adhesion plaque protein. Binds alpha-actinin and the CRP protein. Important for targeting TES and ENA/VASP family members to focal adhesions and for the formation of actin-rich structures. May be a component of a signal transduction pathway that mediates adhesion-stimulated changes in gene expression. The polypeptide is Zyxin (Zyx) (Mus musculus (Mouse)).